The primary structure comprises 42 residues: uncharacterized protein (42 aa).

A helical transmembrane segment spans residues 5-27 (FLHTNITIIPHSVLYVSLSYYII).

It is found in the membrane. This is an uncharacterized protein from Saccharomyces cerevisiae (strain ATCC 204508 / S288c) (Baker's yeast).